The primary structure comprises 142 residues: Nucleoside diphosphate kinase (142 aa).

ATP contacts are provided by Lys9, Phe57, Arg85, Thr91, Arg102, and Asn112. Residues 87–106 are disordered; the sequence is AMGATDPAKSEKGTVRGDLG. His115 acts as the Pros-phosphohistidine intermediate in catalysis.

This sequence belongs to the NDK family. Homotetramer. Requires Mg(2+) as cofactor.

The protein resides in the cytoplasm. It catalyses the reaction a 2'-deoxyribonucleoside 5'-diphosphate + ATP = a 2'-deoxyribonucleoside 5'-triphosphate + ADP. It carries out the reaction a ribonucleoside 5'-diphosphate + ATP = a ribonucleoside 5'-triphosphate + ADP. Its function is as follows. Major role in the synthesis of nucleoside triphosphates other than ATP. The ATP gamma phosphate is transferred to the NDP beta phosphate via a ping-pong mechanism, using a phosphorylated active-site intermediate. The sequence is that of Nucleoside diphosphate kinase from Dehalococcoides mccartyi (strain ATCC BAA-2266 / KCTC 15142 / 195) (Dehalococcoides ethenogenes (strain 195)).